We begin with the raw amino-acid sequence, 114 residues long: V-type proton ATPase subunit G (114 aa).

Ser-2 bears the N-acetylserine mark.

The protein belongs to the V-ATPase G subunit family. V-ATPase is a heteromultimeric enzyme composed of a peripheral catalytic V1 complex (components A to H) attached to an integral membrane V0 proton pore complex (components: a, c, c', c'', d, e, f and VOA1).

It is found in the vacuole membrane. Functionally, subunit of the V1 complex of vacuolar(H+)-ATPase (V-ATPase), a multisubunit enzyme composed of a peripheral complex (V1) that hydrolyzes ATP and a membrane integral complex (V0) that translocates protons. V-ATPase is responsible for acidifying and maintaining the pH of intracellular compartments. The polypeptide is V-type proton ATPase subunit G (Saccharomyces cerevisiae (strain ATCC 204508 / S288c) (Baker's yeast)).